Reading from the N-terminus, the 195-residue chain is MDFIKSLVENKLLLIGNFVLTSGKISPYYLDLRRLSNYYEIFSDTVNKAIDKIKNIDFDMIIGIATGGIPFASFISCRMGKPLGYIRMEKKGYGTDKILEADVSGRKILLVDDVATTGGSLSKAVEIINSEGGRVVASLVIVDREEGAEKKLGEYGVKLISVYKIREILEYLLNSSLISDNDKNNIKEYLVKNIE.

5-phospho-alpha-D-ribose 1-diphosphate is bound by residues Arg-87, Lys-91, and 112 to 120 (DDVATTGGS). Residues Thr-116 and Arg-144 each contribute to the orotate site.

It belongs to the purine/pyrimidine phosphoribosyltransferase family. PyrE subfamily. In terms of assembly, homodimer. It depends on Mg(2+) as a cofactor.

The enzyme catalyses orotidine 5'-phosphate + diphosphate = orotate + 5-phospho-alpha-D-ribose 1-diphosphate. The protein operates within pyrimidine metabolism; UMP biosynthesis via de novo pathway; UMP from orotate: step 1/2. In terms of biological role, catalyzes the transfer of a ribosyl phosphate group from 5-phosphoribose 1-diphosphate to orotate, leading to the formation of orotidine monophosphate (OMP). This chain is Orotate phosphoribosyltransferase, found in Sulfurisphaera tokodaii (strain DSM 16993 / JCM 10545 / NBRC 100140 / 7) (Sulfolobus tokodaii).